Here is a 199-residue protein sequence, read N- to C-terminus: ATP-dependent Clp protease proteolytic subunit (199 aa).

The active-site Nucleophile is S99. H124 is a catalytic residue.

This sequence belongs to the peptidase S14 family. As to quaternary structure, fourteen ClpP subunits assemble into 2 heptameric rings which stack back to back to give a disk-like structure with a central cavity, resembling the structure of eukaryotic proteasomes.

It localises to the cytoplasm. It carries out the reaction Hydrolysis of proteins to small peptides in the presence of ATP and magnesium. alpha-casein is the usual test substrate. In the absence of ATP, only oligopeptides shorter than five residues are hydrolyzed (such as succinyl-Leu-Tyr-|-NHMec, and Leu-Tyr-Leu-|-Tyr-Trp, in which cleavage of the -Tyr-|-Leu- and -Tyr-|-Trp bonds also occurs).. Its function is as follows. Cleaves peptides in various proteins in a process that requires ATP hydrolysis. Has a chymotrypsin-like activity. Plays a major role in the degradation of misfolded proteins. In Moorella thermoacetica (strain ATCC 39073 / JCM 9320), this protein is ATP-dependent Clp protease proteolytic subunit.